The chain runs to 354 residues: MAYRYHNDLLAPYLALPQGDKIQAEYVWVDGDGGLRSKTTTVSKKVTDIGSLRIWDFDGSSTNQAPGHDSDVYLRPAAIFKDPFRGGDNILVLAETYNSDGTPNRTNFRHHAAKVMEQAKEDVPWFGLEQEYTLFDADGSPYGWPKGGFPGPQGPYYCGAGTGKVFARDLIEAHYRACLYSGINISGINAEVMPSQWEFQVGPCEGISMGDHLWMARYLLVRIAEQWAVKVSFHPKPLQGDWNGAGCHTNYSTKAMREPGGMKVIEEAIEKLSKRHDEHIAVYGEDNDLRLTGRHETGHIGAFSSGVANRGASIRVPRHVAAQGYGYLEDRRPASNIDPYRVTSIIVETTLLNA.

The GS beta-grasp domain maps to 22-101 (IQAEYVWVDG…VLAETYNSDG (80 aa)). The GS catalytic domain maps to 108–354 (FRHHAAKVME…IIVETTLLNA (247 aa)).

It belongs to the glutamine synthetase family. Homooctamer.

It localises to the cytoplasm. The catalysed reaction is L-glutamate + NH4(+) + ATP = L-glutamine + ADP + phosphate + H(+). This is Glutamine synthetase (GLN1) from Hebeloma cylindrosporum.